The following is a 634-amino-acid chain: Chaperone protein HtpG (634 aa).

The a; substrate-binding stretch occupies residues 1–342 (MSVETQKETL…SNDLSLNVSR (342 aa)). Positions 343–559 (EILQKDPVID…EQDLGLQMRQ (217 aa)) are b. A c region spans residues 560-634 (ILEASGQKVP…LNKLLVELSA (75 aa)).

This sequence belongs to the heat shock protein 90 family. In terms of assembly, homodimer.

Its subcellular location is the cytoplasm. Molecular chaperone. Has ATPase activity. The chain is Chaperone protein HtpG from Pseudomonas aeruginosa (strain ATCC 15692 / DSM 22644 / CIP 104116 / JCM 14847 / LMG 12228 / 1C / PRS 101 / PAO1).